A 217-amino-acid chain; its full sequence is MTIKVHGNPRSTATQRVLVALYEKHLEFEFVPIDMGAGGHKQPSYLALNPFGQVPALEDGEIKLFESRAITKYLAYTHDHQNEGTSLIHKEKHEMAAQLVWEEVEAHQFDPVASKLAWELVFKGIFGMQTDTTVVEENEAKLAKVLDVYEARLTESEYLGANDSFTLVDLHHLPLLGYLMGTQVKKLFEERAHVSAWCKKILARPSWEKTLALQKQA.

The 81-residue stretch at Thr-2 to Asn-82 folds into the GST N-terminal domain. Glutathione is bound by residues Ser-11, His-40 to Lys-41, Gln-53 to Val-54, and Glu-66 to Ser-67. Residues Glu-91–Ala-217 enclose the GST C-terminal domain.

Belongs to the GST superfamily. Phi family.

It is found in the cytoplasm. It carries out the reaction RX + glutathione = an S-substituted glutathione + a halide anion + H(+). Functionally, conjugation of reduced glutathione to a wide number of exogenous and endogenous hydrophobic electrophiles. The chain is Glutathione S-transferase (GST) from Silene vulgaris (Bladder campion).